An 829-amino-acid polypeptide reads, in one-letter code: MKLSRRDFMKANAVAAAAAVAGVSAPTLAANLITSTDKTAITWDKAPCRFCGTGCSVLVGSQDGRVVATQGDPDAPVNRGLNCIKGYFLSKIMYGQDRLTQPMLRMTDGKFDKNGNFAPISWDQAFDIMAEKFKTTLKEKGPTAVGMFGSGQWTVWEGYAAAKLMKAGLRTNNLDPNARHCMASAVVGFMRTFGMDEPMGCYDDIEQADAFVLWGSNMAEMHPILWSRISDRRLSHQDVQVHVLSTFEHRSFELADNGMVFTPQTDLAILNYIANYIIQNDKVNWEFVNKHTQFRKGVTDIGYGLRPTNPLQQKAKNPDSGDSTPMSFDDFAKFVADYDLESVSKLSGVPKDKLEKLAQLYADPSKKVVSYWTMGFNQHTRGVWANNLCYNIHLLTGKISTPGSGPFSLTGQPSACGTAREVGTFAHRLPADMVVTEPKHRAIAEKIWKLPEGTIPEQVGYHAVLQNRMLKDGKLNAYWVMCNNNMQAGPNMNEEGLPGYRNPANFIVVSDPYPTVTAQAADLILPTAMWVEKEGAYGNAERRTQFWHQQVKPPEGAKSDLWQLMEFSKRFKVEEVWPAELIAKMPEVKGKTLFDVLYANGQVNQFPKEQSKGALNDEAEHFGFYVQKGLFEEYATFGRGHGHDLAPFDQYHEARGLRWPVVDGKETLWRYREGFDPYVKAGEGVRFYGKPDGKAVIFALPYEPAAEAPDKEYDMWLSTGRVLEHWHTGTMTRRVPELYRAFPDAVLFMHPEDAKARGVRRGEEVIVSSRRGEVKTRVETRGRNRPPKGLVFMPFFDASQLVNKLTLDATDPLSKETDYKKCAVKVVKA.

Residues 1 to 30 (MKLSRRDFMKANAVAAAAAVAGVSAPTLAA) constitute a signal peptide (tat-type signal). One can recognise a 4Fe-4S Mo/W bis-MGD-type domain in the interval 41-97 (ITWDKAPCRFCGTGCSVLVGSQDGRVVATQGDPDAPVNRGLNCIKGYFLSKIMYGQD). [4Fe-4S] cluster is bound by residues Cys48, Cys51, Cys55, and Cys83. Mo-bis(molybdopterin guanine dinucleotide) is bound by residues Lys85, Gln152, Asn177, Cys181, 214 to 221 (WGSNMAEM), 245 to 249 (STFEH), 264 to 266 (QTD), Met374, Gln378, Asn484, 510 to 511 (SD), Lys533, Asp560, and 719 to 728 (TGRVLEHWHT). Substrate is bound at residue Phe795. Asn803 and Lys820 together coordinate Mo-bis(molybdopterin guanine dinucleotide).

It belongs to the prokaryotic molybdopterin-containing oxidoreductase family. NasA/NapA/NarB subfamily. As to quaternary structure, component of the periplasmic nitrate reductase NapAB complex composed of NapA and NapB. [4Fe-4S] cluster serves as cofactor. It depends on Mo-bis(molybdopterin guanine dinucleotide) as a cofactor. Post-translationally, predicted to be exported by the Tat system. The position of the signal peptide cleavage has not been experimentally proven.

The protein localises to the periplasm. The catalysed reaction is 2 Fe(II)-[cytochrome] + nitrate + 2 H(+) = 2 Fe(III)-[cytochrome] + nitrite + H2O. Catalytic subunit of the periplasmic nitrate reductase complex NapAB. Receives electrons from NapB and catalyzes the reduction of nitrate to nitrite. This Aeromonas hydrophila subsp. hydrophila (strain ATCC 7966 / DSM 30187 / BCRC 13018 / CCUG 14551 / JCM 1027 / KCTC 2358 / NCIMB 9240 / NCTC 8049) protein is Periplasmic nitrate reductase.